Reading from the N-terminus, the 381-residue chain is MMKKSLCCALLLTASFSTFAAAKTEQQIADIVNRTITPLMQEQAIPGMAVAVIYQGKPYYFTWGKADIANNHPVTQQTLFELGSVSKTFNGVLGGDAIARGEIKLSDPVTKYWPELTGKQWQGIRLLHLATYTAGGLPLQIPDDVRDKAALLHFYQNWQPQWTPGAKRLYANSSIGLFGALAVKPSGMSYEEAMTRRVLQPLKLAHTWITVPQNEQKDYAWGYREGKPVHVSPGQLDAEAYGVKSSVIDMARWVQANMDASHVQEKTLQQGIALAQSRYWRIGDMYQGLGWEMLNWPLKADSIINGSDSKVALAALPAVEVNPPAPAVKASWVHKTGSTGGFGSYVAFVPEKNLGIVMLANKSYPNPVRVEAAWRILEKLQ.

Positions 1 to 20 (MMKKSLCCALLLTASFSTFA) are cleaved as a signal peptide. The active-site Acyl-ester intermediate is the Ser84. The a beta-lactam site is built by Ser84, Gln140, Tyr170, and Asn172.

Belongs to the class-C beta-lactamase family.

It catalyses the reaction a beta-lactam + H2O = a substituted beta-amino acid. With respect to regulation, inhibited by the beta-lactamase-blocking agents sulbactam, tazobactam, avibactam and 3-aminophenylboronic acid (APB). Class C beta-lactamase which confers resistance to penicillins and cephalosporins. Has nitrocefin-, cefoxitin- and cefoperazone-hydrolyzing activities. This chain is Beta-lactamase CMY-2, found in Klebsiella pneumoniae.